The chain runs to 87 residues: Small ribosomal subunit protein uS15 (87 aa).

The protein belongs to the universal ribosomal protein uS15 family. In terms of assembly, part of the 30S ribosomal subunit. Forms a bridge to the 50S subunit in the 70S ribosome, contacting the 23S rRNA.

One of the primary rRNA binding proteins, it binds directly to 16S rRNA where it helps nucleate assembly of the platform of the 30S subunit by binding and bridging several RNA helices of the 16S rRNA. Functionally, forms an intersubunit bridge (bridge B4) with the 23S rRNA of the 50S subunit in the ribosome. The chain is Small ribosomal subunit protein uS15 from Cutibacterium acnes (strain DSM 16379 / KPA171202) (Propionibacterium acnes).